A 238-amino-acid polypeptide reads, in one-letter code: Ribosomal RNA small subunit methyltransferase G (238 aa).

Residues G78, A129–E130, and R148 each bind S-adenosyl-L-methionine.

It belongs to the methyltransferase superfamily. RNA methyltransferase RsmG family.

It localises to the cytoplasm. Specifically methylates the N7 position of a guanine in 16S rRNA. This is Ribosomal RNA small subunit methyltransferase G from Caldicellulosiruptor bescii (strain ATCC BAA-1888 / DSM 6725 / KCTC 15123 / Z-1320) (Anaerocellum thermophilum).